The primary structure comprises 544 residues: Ribosomal protein S6 kinase-like 1 (544 aa).

One can recognise an MIT domain in the interval 87 to 115; it reads VHVDPNKERREAVKLKITKYLRRAEEIFN. One can recognise a Protein kinase domain in the interval 145–534; sequence SALEQLKGCR…TSRLKSHPFF (390 aa). ATP-binding positions include 151 to 159 and lysine 177; that span reads KGCRVVGII. 2 disordered regions span residues 262–344 and 353–372; these read PAEL…HWVR and AYGRGRGRNPPSANRASLGS. Positions 303–313 are enriched in polar residues; sequence SRPSAVFSSDP. The Proton acceptor role is filled by aspartate 407.

It belongs to the protein kinase superfamily. Ser/Thr protein kinase family. S6 kinase subfamily.

It carries out the reaction L-seryl-[protein] + ATP = O-phospho-L-seryl-[protein] + ADP + H(+). The enzyme catalyses L-threonyl-[protein] + ATP = O-phospho-L-threonyl-[protein] + ADP + H(+). In Mus musculus (Mouse), this protein is Ribosomal protein S6 kinase-like 1 (Rps6kl1).